A 243-amino-acid chain; its full sequence is Probable 2-phosphosulfolactate phosphatase (243 aa).

The protein belongs to the ComB family. Mg(2+) is required as a cofactor.

It catalyses the reaction (2R)-O-phospho-3-sulfolactate + H2O = (2R)-3-sulfolactate + phosphate. This is Probable 2-phosphosulfolactate phosphatase from Prochlorococcus marinus (strain MIT 9303).